A 211-amino-acid chain; its full sequence is Regulator of G-protein signaling 2 (211 aa).

Residues 32–66 form a necessary for membrane association region; that stretch reads KMKRTLLKDWKTRLSYFLQNSSAPGKPKTGKKSKQ. The segment at 79–116 is necessary to inhibit protein synthesis; that stretch reads LWAEAFDELLASKYGLAAFRAFLKSEFCEENIEFWLAC. The region spanning 83–199 is the RGS domain; sequence AFDELLASKY…LESEFYQDLC (117 aa).

Interacts with GNAQ. Does not interact with GNAI1 and GNAI3. Interacts with EIF2B5. Interacts with PRKG1 (isoform alpha). In terms of processing, phosphorylated by protein kinase C. Phosphorylation by PRKG1 leads to activation of RGS2 activity. As to expression, expressed in a wide variety of tissues.

The protein localises to the cell membrane. It localises to the cytoplasm. The protein resides in the nucleus. Its subcellular location is the nucleolus. In terms of biological role, regulates G protein-coupled receptor signaling cascades. Inhibits signal transduction by increasing the GTPase activity of G protein alpha subunits, thereby driving them into their inactive GDP-bound form. It is involved in the negative regulation of the angiotensin-activated signaling pathway. Plays a role in the regulation of blood pressure in response to signaling via G protein-coupled receptors and GNAQ. Plays a role in regulating the constriction and relaxation of vascular smooth muscle. Binds EIF2B5 and blocks its activity, thereby inhibiting the translation of mRNA into protein. The protein is Regulator of G-protein signaling 2 (Rgs2) of Mus musculus (Mouse).